The primary structure comprises 593 residues: Pyruvate decarboxylase 1 (593 aa).

Polar residues predominate over residues 1–19; that stretch reads METETETPNGSTPCPTSAP. Positions 1-20 are disordered; the sequence is METETETPNGSTPCPTSAPS. 2 residues coordinate substrate: Asp-55 and His-142. Positions 420–502 are thiamine pyrophosphate binding; it reads DSWFNCQKLR…FLINNGGYTI (83 aa). Mg(2+)-binding residues include Asp-470, Asn-497, and Gly-499. A substrate-binding site is contributed by Glu-503.

It belongs to the TPP enzyme family. In terms of assembly, homotetramer. The cofactor is a metal cation. Requires thiamine diphosphate as cofactor.

It catalyses the reaction a 2-oxocarboxylate + H(+) = an aldehyde + CO2. The sequence is that of Pyruvate decarboxylase 1 (PDC1) from Pisum sativum (Garden pea).